Here is a 1438-residue protein sequence, read N- to C-terminus: Membrane-anchored lipid-binding protein YSP2 (1438 aa).

Over residues 1-17 (MRDEATRKKRSFSDGHF) the composition is skewed to basic and acidic residues. 7 disordered regions span residues 1–97 (MRDE…SHTP), 174–194 (KVKH…NERP), 200–219 (QKDD…SAPN), 285–308 (QQQH…QNPN), 338–418 (TSGP…KVKF), 455–485 (DENN…LGPK), and 505–543 (SQSN…RYSS). Topologically, residues 1–1277 (MRDEATRKKR…SAFSMLQQVN (1277 aa)) are cytoplasmic. The residue at position 13 (Ser-13) is a Phosphoserine. The segment covering 18-29 (FKKLKLMSRKKQ) has biased composition (basic residues). A compositionally biased stretch (basic and acidic residues) spans 30 to 44 (PVMERSKTTRTRKES). The segment covering 45 to 58 (TNSAAKSSLSLRRA) has biased composition (low complexity). The segment covering 74-97 (IGSTNEGVAGNSGSNSPAQYSHTP) has biased composition (polar residues). 2 stretches are compositionally biased toward low complexity: residues 286–298 (QQHP…GPLP) and 374–398 (PTNT…ANSN). Position 411 is a phosphoserine (Ser-411). Low complexity predominate over residues 455 to 470 (DENNTNNNPNASSTNL). The span at 471–485 (SHISKSNVNNNLGPK) shows a compositional bias: polar residues. Ser-596 is modified (phosphoserine). Residues 648-716 (EFHTLFKDCD…KEIVQIEKKT (69 aa)) form the GRAM domain. The disordered stretch occupies residues 777–843 (SSSAFFDDSD…LGPNKHSPTT (67 aa)). Residues 783-800 (DDSDDNDDDGDLDDDDPD) show a composition bias toward acidic residues. The span at 818–832 (NESNDLGKNQKSTNY) shows a compositional bias: polar residues. The 168-residue stretch at 851 to 1018 (NDHLVIEANI…EIKKILSDED (168 aa)) folds into the VASt 1 domain. Ser-1032 bears the Phosphoserine mark. The 167-residue stretch at 1059 to 1225 (DDTVIDEKIN…DLKKIISNAS (167 aa)) folds into the VASt 2 domain. Residues 1225 to 1257 (SSTKKKSRRRGKTVNKRKSSPSTIKNEKNEENF) form a disordered region. Residues 1227–1243 (TKKKSRRRGKTVNKRKS) are compositionally biased toward basic residues. The chain crosses the membrane as a helical span at residues 1278-1298 (ITSVQGIMTIISFFICLIFFF). Topologically, residues 1299–1438 (RLLFHSKNTS…DNTSATNQLL (140 aa)) are lumenal. N-linked (GlcNAc...) asparagine glycans are attached at residues Asn-1306, Asn-1373, and Asn-1430.

Belongs to the YSP2 family.

Its subcellular location is the mitochondrion membrane. The protein localises to the endoplasmic reticulum membrane. Involved in induction of programmed cell death in response to reactive oxygen species (ROS). May be involved in sterol transfer between intracellular membranes. The protein is Membrane-anchored lipid-binding protein YSP2 of Saccharomyces cerevisiae (strain ATCC 204508 / S288c) (Baker's yeast).